Here is a 389-residue protein sequence, read N- to C-terminus: Flap endonuclease 1 (389 aa).

Residues 1-105 are N-domain; sequence MGIKGLTALL…GELAKRKDKR (105 aa). Asp-34 serves as a coordination point for Mg(2+). Arg-71 contacts DNA. The Mg(2+) site is built by Asp-87, Glu-159, Glu-161, Asp-180, and Asp-182. Residues 123–254 are I-domain; the sequence is EVEKLSKRTV…KTALKLIKEH (132 aa). Glu-159 contacts DNA. 2 residues coordinate DNA: Gly-232 and Asp-234. Asp-234 lines the Mg(2+) pocket. The tract at residues 338–346 is interaction with PCNA; sequence SQNRLESFF. Residues 356–389 are disordered; that stretch reads IGKRKVEETKSGKGSKAGLNKKSKGVSGYKSKKT. Over residues 374–389 the composition is skewed to basic residues; sequence LNKKSKGVSGYKSKKT.

Belongs to the XPG/RAD2 endonuclease family. FEN1 subfamily. As to quaternary structure, interacts with PCNA. Three molecules of FEN1 bind to one PCNA trimer with each molecule binding to one PCNA monomer. PCNA stimulates the nuclease activity without altering cleavage specificity. It depends on Mg(2+) as a cofactor. Post-translationally, phosphorylated. Phosphorylation upon DNA damage induces relocalization to the nuclear plasma.

It localises to the nucleus. The protein resides in the nucleolus. It is found in the nucleoplasm. Its subcellular location is the mitochondrion. In terms of biological role, structure-specific nuclease with 5'-flap endonuclease and 5'-3' exonuclease activities involved in DNA replication and repair. During DNA replication, cleaves the 5'-overhanging flap structure that is generated by displacement synthesis when DNA polymerase encounters the 5'-end of a downstream Okazaki fragment. It enters the flap from the 5'-end and then tracks to cleave the flap base, leaving a nick for ligation. Also involved in the long patch base excision repair (LP-BER) pathway, by cleaving within the apurinic/apyrimidinic (AP) site-terminated flap. Acts as a genome stabilization factor that prevents flaps from equilibrating into structures that lead to duplications and deletions. Also possesses 5'-3' exonuclease activity on nicked or gapped double-stranded DNA, and exhibits RNase H activity. Also involved in replication and repair of rDNA and in repairing mitochondrial DNA. This is Flap endonuclease 1 from Ostreococcus tauri.